We begin with the raw amino-acid sequence, 513 residues long: Protein disulfide-isomerase 2 (513 aa).

Positions 1-20 (MNKFLALLFVLALFANIAFS) are cleaved as a signal peptide. Thioredoxin domains follow at residues 21–147 (CEGH…EELK) and 355–486 (DVIG…DNAA). Active-site nucleophile residues include Cys-70, Cys-73, Cys-406, and Cys-409. Disulfide bonds link Cys-70–Cys-73 and Cys-406–Cys-409. Positions 491–513 (LPSSQTDDNVESKKDSSAKHDEL) are disordered. Basic and acidic residues predominate over residues 500–513 (VESKKDSSAKHDEL). The short motif at 510-513 (HDEL) is the Prevents secretion from ER element.

This sequence belongs to the protein disulfide isomerase family.

Its subcellular location is the endoplasmic reticulum lumen. The catalysed reaction is Catalyzes the rearrangement of -S-S- bonds in proteins.. Participates in the folding of proteins containing disulfide bonds, may be involved in glycosylation, prolyl hydroxylation and triglyceride transfer. The chain is Protein disulfide-isomerase 2 (pdi2) from Dictyostelium discoideum (Social amoeba).